The following is a 503-amino-acid chain: Zinc metalloproteinase nas-14 (503 aa).

An N-terminal signal peptide occupies residues 1-25 (MRLLYSLFHCSAFLVGFTLSVGVLP). One can recognise a Peptidase M12A domain in the interval 116-312 (NLVTYPDKLW…KKVNKLYQCG (197 aa)). Cystine bridges form between Cys158–Cys311 and Cys182–Cys202. An N-linked (GlcNAc...) asparagine glycan is attached at Asn192. His210 is a Zn(2+) binding site. Glu211 is a catalytic residue. Residues His214 and His220 each contribute to the Zn(2+) site. Positions 317–340 (TSSTTTTTTTTTTTTTTEEPTTTT) are enriched in low complexity. The disordered stretch occupies residues 317-377 (TSSTTTTTTT…TPKPVERSRN (61 aa)). Positions 342-351 (VEEKPKDKKV) are enriched in basic and acidic residues. Low complexity predominate over residues 352–370 (SSTTTTTKKPTTTTTTTPK). Disulfide bonds link Cys380–Cys414, Cys387–Cys407, and Cys396–Cys411. A ShKT 1 domain is found at 380–414 (CEDLNAHCGMWEQLGHCQHSVKYMAHYCRKACNLC). Residues 422–464 (TTTTPKPVPRNKEKENKSASSTTRGTSTATSTTPKTTTTTTSA) form a disordered region. N-linked (GlcNAc...) asparagine glycosylation is present at Asn437. Over residues 439 to 464 (SASSTTRGTSTATSTTPKTTTTTTSA) the composition is skewed to low complexity. Intrachain disulfides connect Cys469-Cys503, Cys476-Cys496, and Cys485-Cys500. The region spanning 469-503 (CEDKNLFCSYWAKIGECNSESKFMKIFCKASCGKC) is the ShKT 2 domain.

Zn(2+) is required as a cofactor. In terms of tissue distribution, expressed in pharyngeal muscles and mc cells.

The protein localises to the secreted. In terms of biological role, metalloprotease. The chain is Zinc metalloproteinase nas-14 (nas-14) from Caenorhabditis elegans.